The sequence spans 239 residues: Probable transcriptional regulatory protein Tcr_1104 (239 aa).

It belongs to the TACO1 family.

The protein resides in the cytoplasm. The polypeptide is Probable transcriptional regulatory protein Tcr_1104 (Hydrogenovibrio crunogenus (strain DSM 25203 / XCL-2) (Thiomicrospira crunogena)).